Here is an 897-residue protein sequence, read N- to C-terminus: Alpha-actinin-2 (897 aa).

Residues 1-257 (MNSMNQIETN…IMTYVSCFYH (257 aa)) are actin-binding. Calponin-homology (CH) domains lie at 41–145 (KQQR…LRFA) and 154–260 (TSAK…HAFA). Spectrin repeat units lie at residues 284–394 (RLME…WLLN), 404–509 (HLAE…ALER), 519–630 (QLHL…SLQE), and 640–743 (RLRR…EVET). EF-hand domains are found at residues 756-791 (EQMN…MGYD) and 792-827 (LGEA…ETAD). Ca(2+) contacts are provided by Asp-769, Asn-773, Asp-780, Asp-805, Asn-807, and Thr-811.

Belongs to the alpha-actinin family. Homodimer; antiparallel. Post-translationally, ubiquitinated by FBXL22, leading to proteasomal degradation.

The protein localises to the cytoplasm. It is found in the myofibril. Its subcellular location is the sarcomere. The protein resides in the z line. F-actin cross-linking protein which is thought to anchor actin to a variety of intracellular structures. This is a bundling protein. This is Alpha-actinin-2 (ACTN2) from Gallus gallus (Chicken).